A 269-amino-acid chain; its full sequence is Glutamate racemase (269 aa).

Residues 14 to 15 (DS) and 46 to 47 (YS) each bind substrate. Cys78 acts as the Proton donor/acceptor in catalysis. 79–80 (NT) provides a ligand contact to substrate. Cys189 serves as the catalytic Proton donor/acceptor. 190–191 (TH) is a binding site for substrate.

This sequence belongs to the aspartate/glutamate racemases family.

The catalysed reaction is L-glutamate = D-glutamate. It functions in the pathway cell wall biogenesis; peptidoglycan biosynthesis. Functionally, provides the (R)-glutamate required for cell wall biosynthesis. The polypeptide is Glutamate racemase (Haemophilus influenzae (strain 86-028NP)).